Consider the following 674-residue polypeptide: Phosphopantothenoylcysteine decarboxylase subunit VHS3 (674 aa).

Disordered stretches follow at residues 1 to 164 (MTNK…SILS), 190 to 230 (LNSD…RPSV), 348 to 368 (QHNSIDTSFNSTNSNAGNITG), 384 to 426 (TSSN…SNVV), and 575 to 674 (VSAG…LQRS). Positions 15 to 81 (ASNTLSGAEQ…TSGAVVSNTP (67 aa)) are enriched in polar residues. At T90 the chain carries Phosphothreonine. The segment covering 106–116 (EQTPPNQVARQ) has biased composition (polar residues). Residues 137–150 (NLKDINTKVPKDGE) are compositionally biased toward basic and acidic residues. Residues 152–164 (SASSFSTPTSILS) show a composition bias toward polar residues. Over residues 198 to 212 (SPRKEHPHFYVEDPL) the composition is skewed to basic and acidic residues. Residues 214–230 (TPSVRSRSNSTSPRPSV) are compositionally biased toward low complexity. Residues 351–368 (SIDTSFNSTNSNAGNITG) show a composition bias toward polar residues. Low complexity predominate over residues 384–395 (TSSNSAASQTNN). Over residues 403–426 (MASTTGFPSTLGGSRTYSNSSNVV) the composition is skewed to polar residues. A compositionally biased stretch (acidic residues) spans 580-591 (EEEEDEDNDEED). The segment covering 592-602 (DNKKNDTGGKD) has biased composition (basic and acidic residues). Acidic residues predominate over residues 603-660 (EDNDDDDDDDDDDDDDDDDDDDDDDDDDDDDDDDDDDDDDDDDDDDDDEDDEDEDEDD). Positions 661–674 (EGKKKEDKGGLQRS) are enriched in basic and acidic residues.

This sequence belongs to the HFCD (homooligomeric flavin containing Cys decarboxylase) superfamily. Interacts with the C-terminal domain of PPZ1. Component of the phosphopantothenoylcysteine decarboxylase (PPCDC) complex, a heterotrimer composed of CAB3, SIS2 and VHS3.

Its function is as follows. Component of the phosphopantothenoylcysteine decarboxylase (PPCDC) involved in the coenzyme A synthesis. Acts as an inhibitory subunit of protein phosphatase PPZ1, which is involved in many cellular processes such as G1-S transition or salt tolerance. The sequence is that of Phosphopantothenoylcysteine decarboxylase subunit VHS3 (VHS3) from Saccharomyces cerevisiae (strain ATCC 204508 / S288c) (Baker's yeast).